The chain runs to 213 residues: Thymidylate kinase (213 aa).

11 to 18 (GPDGAGKT) is an ATP binding site.

This sequence belongs to the thymidylate kinase family.

The enzyme catalyses dTMP + ATP = dTDP + ADP. Phosphorylation of dTMP to form dTDP in both de novo and salvage pathways of dTTP synthesis. The protein is Thymidylate kinase of Oenococcus oeni (strain ATCC BAA-331 / PSU-1).